A 212-amino-acid chain; its full sequence is ECF RNA polymerase sigma factor SigD (212 aa).

The segment at 49–119 (ETIRPIVVRY…VADAHRAAGR (71 aa)) is sigma-70 factor domain-2. The short motif at 75–78 (DVAQ) is the Polymerase core binding element. Residues 152 to 201 (NELLEILPAKQREILILRVVVGLSAEETAAAVGSTTGAVRVAQHRALQRL) are sigma-70 factor domain-4. The segment at residues 176-195 (AEETAAAVGSTTGAVRVAQH) is a DNA-binding region (H-T-H motif).

The protein belongs to the sigma-70 factor family. ECF subfamily. As to quaternary structure, interacts transiently with the RNA polymerase catalytic core formed by RpoA, RpoB, RpoC and RpoZ (2 alpha, 1 beta, 1 beta' and 1 omega subunit) to form the RNA polymerase holoenzyme that can initiate transcription. Interacts (via sigma-70 factor domain 4) with RsdA.

Functionally, sigma factors are initiation factors that promote the attachment of RNA polymerase to specific initiation sites and are then released. Extracytoplasmic function (ECF) sigma factors are held in an inactive form by an anti-sigma factor until released by regulated intramembrane proteolysis. The chain is ECF RNA polymerase sigma factor SigD (sigD) from Mycobacterium bovis (strain ATCC BAA-935 / AF2122/97).